We begin with the raw amino-acid sequence, 252 residues long: Reaction center protein L chain (252 aa).

Helical transmembrane passes span 8–30 (FFGV…GAAL), 58–86 (GGLW…SRKL), and 91–113 (HVPA…RPLL). His128 and His148 together coordinate (7R,8Z)-bacteriochlorophyll b. A helical membrane pass occupies residues 146 to 173 (PMHMVAVTLFFTTTLALALHGSLVLAAI). His165 provides a ligand contact to Fe cation. Phe191 serves as a coordination point for a ubiquinone. A helical membrane pass occupies residues 200–225 (GTLGIHRLGLFLALGAGFASATCILL). A Fe cation-binding site is contributed by His205.

It belongs to the reaction center PufL/M/PsbA/D family. Reaction center is composed of four bacteriochlorophylls, two bacteriopheophytins, two ubiquinones, one iron, and two highly hydrophobic polypeptide chains (designated L and M).

Its subcellular location is the cell inner membrane. The reaction center is a membrane-bound complex that mediates the initial photochemical event in the electron transfer process of photosynthesis. The chain is Reaction center protein L chain (pufL) from Acidiphilium cryptum.